The sequence spans 315 residues: Homoserine kinase (315 aa).

91-101 (PIGSGLGSSAS) contacts ATP.

It belongs to the GHMP kinase family. Homoserine kinase subfamily.

Its subcellular location is the cytoplasm. The catalysed reaction is L-homoserine + ATP = O-phospho-L-homoserine + ADP + H(+). It participates in amino-acid biosynthesis; L-threonine biosynthesis; L-threonine from L-aspartate: step 4/5. In terms of biological role, catalyzes the ATP-dependent phosphorylation of L-homoserine to L-homoserine phosphate. This chain is Homoserine kinase, found in Buchnera aphidicola subsp. Cinara cedri (strain Cc).